The chain runs to 1843 residues: Nonribosomal peptide synthetase SIDD (1843 aa).

Positions 1–83 (MLSIDDHGGG…QQQQQQQQRS (83 aa)) are disordered. A compositionally biased stretch (low complexity) spans 65-81 (QQQQQQQQQQQQQQQQQ). The tract at residues 133 to 528 (TYSELEHLST…TEVEHHIQTC (396 aa)) is adenylation 1. The segment at 628-647 (KLGATHADEGPQEEPETDAE) is disordered. Residues 641-716 (EPETDAEKKL…AMANKSTSIS (76 aa)) enclose the Carrier 1 domain. S677 carries the post-translational modification O-(pantetheine 4'-phosphoryl)serine. The segment at 753 to 1175 (VEDVYPCTPL…ALSDDDAAAL (423 aa)) is condensation 1. The Carrier 2 domain occupies 1289–1365 (SATSQRQRRL…EMAAVMECTD (77 aa)). The residue at position 1326 (S1326) is an O-(pantetheine 4'-phosphoryl)serine. The interval 1447–1734 (FFDGPVDLRR…LREIAENCGL (288 aa)) is condensation 2.

It belongs to the NRP synthetase family. Pantetheine 4'-phosphate is required as a cofactor.

Its pathway is siderophore biosynthesis. Its function is as follows. Nonribosomal peptide synthetase; part of the gene cluster that mediates the biosynthesis of at least 11 siderophores, including beauverichelin A, dimerumic acid (DA), Na-dimethyl coprogen (NADC), eleutherazine B, ferricrocin (FC), fusarinine A, fusarinine C (FsC), metachelin A, mevalonolactone, rhodotorulic acid (RA) and tenellin. This cocktail of siderophores for iron metabolism is essential for virulence, and more specifically for the fungal virulence in penetrating through the host cuticle. Siderophore synthesis is also involved in conidial germination under iron-deficient conditions. SIDC catalyzes the assembly of ferricrocin whereas SIDD catalyzes the assembly of fusarinine C. The chain is Nonribosomal peptide synthetase SIDD from Beauveria bassiana (strain ARSEF 2860) (White muscardine disease fungus).